The following is a 456-amino-acid chain: Trigger factor (456 aa).

The PPIase FKBP-type domain occupies 192–277 (GDTVVIDFVG…IHEVKTKEVP (86 aa)).

This sequence belongs to the FKBP-type PPIase family. Tig subfamily.

The protein resides in the cytoplasm. The enzyme catalyses [protein]-peptidylproline (omega=180) = [protein]-peptidylproline (omega=0). Functionally, involved in protein export. Acts as a chaperone by maintaining the newly synthesized protein in an open conformation. Functions as a peptidyl-prolyl cis-trans isomerase. This Streptococcus pyogenes serotype M12 (strain MGAS9429) protein is Trigger factor.